A 564-amino-acid chain; its full sequence is Nucleoprotein (564 aa).

A binding site for the cap structure m7GTP region spans residues Leu-54–Ile-236. Mn(2+) is bound by residues Asp-380 and Glu-382. Positions 390, 497, 500, and 525 each coordinate Zn(2+). Residue Asp-529 participates in Mn(2+) binding.

The protein belongs to the arenaviridae nucleocapsid protein family. In terms of assembly, homomultimerizes to form the nucleocapsid. Binds to viral genomic RNA. Interacts with glycoprotein G2. Interacts with protein Z; this interaction probably directs the encapsidated genome to budding sites. Interacts with protein L; this interaction does not interfere with Z-L interaction. Interacts with host IKBKE (via Protein kinase domain); the interaction inhibits IKBKE kinase activity.

Its subcellular location is the virion. The protein resides in the host cytoplasm. In terms of biological role, encapsidates the genome, protecting it from nucleases. The encapsidated genomic RNA is termed the nucleocapsid (NC). Serves as template for viral transcription and replication. The increased presence of protein N in host cell does not seem to trigger the switch from transcription to replication as observed in other negative strain RNA viruses. Through the interaction with host IKBKE, strongly inhibits the phosphorylation and nuclear translocation of host IRF3, a protein involved in interferon activation pathway, leading to the inhibition of interferon-beta and IRF3-dependent promoters activation. Also encodes a functional 3'-5' exoribonuclease that degrades preferentially dsRNA substrates and thereby participates in the suppression of interferon induction. This Akodon azarae (Azara's grass mouse) protein is Nucleoprotein.